A 168-amino-acid polypeptide reads, in one-letter code: Phosphopantetheine adenylyltransferase (168 aa).

Thr13 contributes to the substrate binding site. ATP is bound by residues 13-14 and His21; that span reads TF. Substrate-binding residues include Lys45, Leu78, and Arg92. ATP-binding positions include 93-95, Glu103, and 128-134; these read GLR and TQFISSS.

This sequence belongs to the bacterial CoaD family. As to quaternary structure, homohexamer. Mg(2+) is required as a cofactor.

The protein localises to the cytoplasm. The catalysed reaction is (R)-4'-phosphopantetheine + ATP + H(+) = 3'-dephospho-CoA + diphosphate. The protein operates within cofactor biosynthesis; coenzyme A biosynthesis; CoA from (R)-pantothenate: step 4/5. In terms of biological role, reversibly transfers an adenylyl group from ATP to 4'-phosphopantetheine, yielding dephospho-CoA (dPCoA) and pyrophosphate. The chain is Phosphopantetheine adenylyltransferase from Wolbachia pipientis subsp. Culex pipiens (strain wPip).